The sequence spans 518 residues: Integrator complex subunit 14 (518 aa).

In terms of domain architecture, VWFA spans 2–204; the sequence is PTVVVMDVSL…KNVQSMFGKL (203 aa). Positions 10, 12, and 86 each coordinate Mg(2+). Lys418 bears the N6-acetyllysine mark.

It belongs to the Integrator subunit 14 family. Component of the Integrator complex, composed of core subunits INTS1, INTS2, INTS3, INTS4, INTS5, INTS6, INTS7, INTS8, INTS9/RC74, INTS10, INTS11/CPSF3L, INTS12, INTS13, INTS14 and INTS15. The core complex associates with protein phosphatase 2A subunits PPP2CA and PPP2R1A, to form the Integrator-PP2A (INTAC) complex. INTS14 is part of the tail subcomplex, composed of INTS10, INTS13, INTS14 and INTS15. In terms of tissue distribution, strongly expressed in numerous cancer cells compared with their non-cancerous counterparts (lung, prostate, colon, stomach and skin).

The protein resides in the nucleus. Its function is as follows. Component of the integrator complex, a multiprotein complex that terminates RNA polymerase II (Pol II) transcription in the promoter-proximal region of genes. The integrator complex provides a quality checkpoint during transcription elongation by driving premature transcription termination of transcripts that are unfavorably configured for transcriptional elongation: the complex terminates transcription by (1) catalyzing dephosphorylation of the C-terminal domain (CTD) of Pol II subunit POLR2A/RPB1 and SUPT5H/SPT5, (2) degrading the exiting nascent RNA transcript via endonuclease activity and (3) promoting the release of Pol II from bound DNA. The integrator complex is also involved in terminating the synthesis of non-coding Pol II transcripts, such as enhancer RNAs (eRNAs), small nuclear RNAs (snRNAs), telomerase RNAs and long non-coding RNAs (lncRNAs). Within the integrator complex, INTS14 is part of the integrator tail module that acts as a platform for the recruitment of transcription factors at promoters. In Homo sapiens (Human), this protein is Integrator complex subunit 14.